Here is a 293-residue protein sequence, read N- to C-terminus: uncharacterized protein (293 aa).

Residues 65-89 (LQKYLENIKNKKLNLNKQSNNQTNN) are a coiled coil. Residues 81 to 112 (KQSNNQTNNQTNNQTNNQTNNQTNNIRPQINN) form a disordered region.

Its subcellular location is the virion. This is an uncharacterized protein from Acanthamoeba polyphaga mimivirus (APMV).